The primary structure comprises 469 residues: Glutamine synthetase (469 aa).

The region spanning 13–97 (HEVKFVDLRF…IRCDILEPGT (85 aa)) is the GS beta-grasp domain. Residues 105-469 (PRSIAKRAED…PVEFELYYSV (365 aa)) form the GS catalytic domain. Residues Glu-130 and Glu-132 each coordinate Mg(2+). Glu-208 is an ATP binding site. Mg(2+) contacts are provided by Glu-213 and Glu-221. Residues 265 to 266 (NG) and Gly-266 contribute to the L-glutamate site. A Mg(2+)-binding site is contributed by His-270. Residues 272 to 274 (HMS) and Ser-274 each bind ATP. Positions 322, 328, and 340 each coordinate L-glutamate. Residues Arg-340, Arg-345, and Lys-353 each coordinate ATP. Glu-358 serves as a coordination point for Mg(2+). Arg-360 serves as a coordination point for L-glutamate. O-AMP-tyrosine is present on Tyr-398.

It belongs to the glutamine synthetase family. In terms of assembly, oligomer of 12 subunits arranged in the form of two hexagons. Mn(2+) is required as a cofactor.

The protein localises to the cytoplasm. The catalysed reaction is L-glutamate + NH4(+) + ATP = L-glutamine + ADP + phosphate + H(+). Its activity is regulated as follows. When cellular nitrogen levels are high, the C-terminal adenylyl transferase (AT) of GlnE inhibits GlnA by covalent transfer of an adenylyl group from ATP to Tyr-398. Conversely, when nitrogen levels are low, the N-terminal adenylyl removase (AR) of GlnE activates GlnA by removing the adenylyl group by phosphorolysis. The fully adenylated enzyme complex is inactive. Functionally, catalyzes the ATP-dependent biosynthesis of glutamine from glutamate and ammonia. This Salmonella typhi protein is Glutamine synthetase.